The following is a 523-amino-acid chain: 2-isopropylmalate synthase (523 aa).

Positions 5–267 (VIIFDTTLRD…HTAINHQEIW (263 aa)) constitute a Pyruvate carboxyltransferase domain. Asp-14, His-202, His-204, and Asn-238 together coordinate Mn(2+). A regulatory domain region spans residues 392 to 523 (RLDYFSVQSG…QHNENNKETV (132 aa)).

This sequence belongs to the alpha-IPM synthase/homocitrate synthase family. LeuA type 1 subfamily. In terms of assembly, homodimer. Requires Mn(2+) as cofactor.

It is found in the cytoplasm. It carries out the reaction 3-methyl-2-oxobutanoate + acetyl-CoA + H2O = (2S)-2-isopropylmalate + CoA + H(+). It participates in amino-acid biosynthesis; L-leucine biosynthesis; L-leucine from 3-methyl-2-oxobutanoate: step 1/4. In terms of biological role, catalyzes the condensation of the acetyl group of acetyl-CoA with 3-methyl-2-oxobutanoate (2-ketoisovalerate) to form 3-carboxy-3-hydroxy-4-methylpentanoate (2-isopropylmalate). This Escherichia coli (strain K12 / MC4100 / BW2952) protein is 2-isopropylmalate synthase.